The primary structure comprises 131 residues: Profilin-3 (131 aa).

C13 and C115 are joined by a disulfide. Positions 81 to 97 (AVIRGKKGAGGITIKKT) match the Involved in PIP2 interaction motif. T111 carries the post-translational modification Phosphothreonine.

Belongs to the profilin family. In terms of assembly, occurs in many kinds of cells as a complex with monomeric actin in a 1:1 ratio. Phosphorylated by MAP kinases.

The protein resides in the cytoplasm. It is found in the cytoskeleton. In terms of biological role, binds to actin and affects the structure of the cytoskeleton. At high concentrations, profilin prevents the polymerization of actin, whereas it enhances it at low concentrations. The sequence is that of Profilin-3 from Olea europaea (Common olive).